The sequence spans 157 residues: Protein Smg (157 aa).

The protein belongs to the Smg family.

This Pectobacterium carotovorum subsp. carotovorum (strain PC1) protein is Protein Smg.